Consider the following 777-residue polypeptide: Protein translocase subunit SecA (777 aa).

ATP is bound by residues glutamine 94, 112–116 (GEGKT), and aspartate 501.

The protein belongs to the SecA family. In terms of assembly, monomer and homodimer. Part of the essential Sec protein translocation apparatus which comprises SecA, SecYEG and auxiliary proteins SecDF. Other proteins may also be involved.

The protein localises to the cell membrane. Its subcellular location is the cytoplasm. The catalysed reaction is ATP + H2O + cellular proteinSide 1 = ADP + phosphate + cellular proteinSide 2.. Part of the Sec protein translocase complex. Interacts with the SecYEG preprotein conducting channel. Has a central role in coupling the hydrolysis of ATP to the transfer of proteins into and across the cell membrane, serving as an ATP-driven molecular motor driving the stepwise translocation of polypeptide chains across the membrane. The chain is Protein translocase subunit SecA from Mycobacterium avium (strain 104).